A 233-amino-acid polypeptide reads, in one-letter code: DNA repair protein RecO (233 aa).

This sequence belongs to the RecO family.

In terms of biological role, involved in DNA repair and RecF pathway recombination. This chain is DNA repair protein RecO, found in Francisella philomiragia subsp. philomiragia (strain ATCC 25017 / CCUG 19701 / FSC 153 / O#319-036).